We begin with the raw amino-acid sequence, 275 residues long: NAD kinase (275 aa).

Aspartate 66 functions as the Proton acceptor in the catalytic mechanism. Residues 66–67, histidine 71, 135–136, lysine 146, arginine 163, aspartate 165, and 176–181 contribute to the NAD(+) site; these read DG, NE, and TAYAMS.

It belongs to the NAD kinase family. Requires a divalent metal cation as cofactor.

Its subcellular location is the cytoplasm. It carries out the reaction NAD(+) + ATP = ADP + NADP(+) + H(+). In terms of biological role, involved in the regulation of the intracellular balance of NAD and NADP, and is a key enzyme in the biosynthesis of NADP. Catalyzes specifically the phosphorylation on 2'-hydroxyl of the adenosine moiety of NAD to yield NADP. This is NAD kinase from Methanosphaera stadtmanae (strain ATCC 43021 / DSM 3091 / JCM 11832 / MCB-3).